The following is a 164-amino-acid chain: Phosphopantetheine adenylyltransferase (164 aa).

It belongs to the eukaryotic CoaD family.

The protein localises to the cytoplasm. The enzyme catalyses (R)-4'-phosphopantetheine + ATP + H(+) = 3'-dephospho-CoA + diphosphate. The protein operates within cofactor biosynthesis; coenzyme A biosynthesis. Functionally, reversibly transfers an adenylyl group from ATP to 4'-phosphopantetheine, yielding dephospho-CoA (dPCoA) and pyrophosphate. This is Phosphopantetheine adenylyltransferase from Methanothermobacter thermautotrophicus (strain ATCC 29096 / DSM 1053 / JCM 10044 / NBRC 100330 / Delta H) (Methanobacterium thermoautotrophicum).